Consider the following 151-residue polypeptide: UPF0178 protein YaiI (151 aa).

This sequence belongs to the UPF0178 family.

The polypeptide is UPF0178 protein YaiI (Salmonella paratyphi C (strain RKS4594)).